A 433-amino-acid polypeptide reads, in one-letter code: tRNA (guanine(10)-N(2))-methyltransferase (433 aa).

This sequence belongs to the class I-like SAM-binding methyltransferase superfamily. TRM11 methyltransferase family. Interacts with TRM112.

The protein localises to the cytoplasm. The catalysed reaction is guanosine(10) in tRNA + S-adenosyl-L-methionine = N(2)-methylguanosine(10) in tRNA + S-adenosyl-L-homocysteine + H(+). Its function is as follows. Catalytic subunit of an S-adenosyl-L-methionine-dependent tRNA methyltransferase complex that mediates the methylation of the guanosine nucleotide at position 10 (m2G10) in tRNAs. In Saccharomyces cerevisiae (strain ATCC 204508 / S288c) (Baker's yeast), this protein is tRNA (guanine(10)-N(2))-methyltransferase (TRM11).